The sequence spans 634 residues: MPIVVLSAQTINKIAAGEVIDCPASVVKELVENSIDAGAKTINVHVDKGGRNLISVSDDGCGIACEEMEKAFIGHATSKLIDGDLANVKTMGFRGEGLTAVASVARVKMVSKHVDAERAWSITFEGGEKTRDLTPGVLSCGTHVEVRDLFFATPTRLKFLRTEKAEMQNIVDLLNRLAMINYTIAFSLTIVERQIFKYSAQESLIERLKEMRAFGEVFCEQSLEINHSIDHVRVYGHIGLPTFNKSKPGMVHTFVNGRPIYSTLLLGAVKSAYHGLIPKDRHPVVVLALDVMPAYVDVNVHPSKMEVRFQDKRLVYKAVLDALGEALSSNVYARFSPAATTSEGHDHFAMDSIEKTYGKFFSEDTEAASTMQLQPEVLNHNIPLLFGSSHVDDSKGTHDTRFCADHTHHNDTKGSVHTKSFSARSSSSAESKMEQGCMLEEPPLGYAVCQLFERYIISRAGDYVIIVDQHAAHERLVCEYIKKVTEQEGIKRQVLLMPEFIELGNEYELELLTEYREKLRDLGLIVEPMGDLTVVVREVPAIFGVVDAKALISKILESIMAKGDELFVKGKLSHICGTVACYSSIRSGRIMKLEEMNSLLRHMESTPHSGQCNHGRPTYVKLKLSEIDKLFERT.

The interval 406 to 427 is disordered; the sequence is HTHHNDTKGSVHTKSFSARSSS.

It belongs to the DNA mismatch repair MutL/HexB family.

This protein is involved in the repair of mismatches in DNA. It is required for dam-dependent methyl-directed DNA mismatch repair. May act as a 'molecular matchmaker', a protein that promotes the formation of a stable complex between two or more DNA-binding proteins in an ATP-dependent manner without itself being part of a final effector complex. This is DNA mismatch repair protein MutL from Anaplasma phagocytophilum (strain HZ).